Reading from the N-terminus, the 113-residue chain is Retrotransposon Gag-like protein 8B (113 aa).

This sequence belongs to the FAM127 family.

The protein is Retrotransposon Gag-like protein 8B (RTL8B) of Homo sapiens (Human).